The primary structure comprises 492 residues: Glutamate--tRNA ligase (492 aa).

The short motif at 13–23 (PSPTGTPHVGM) is the 'HIGH' region element. A 'KMSKS' region motif is present at residues 257–261 (KLSKR). An ATP-binding site is contributed by K260.

This sequence belongs to the class-I aminoacyl-tRNA synthetase family. Glutamate--tRNA ligase type 1 subfamily. As to quaternary structure, monomer.

Its subcellular location is the cytoplasm. It carries out the reaction tRNA(Glu) + L-glutamate + ATP = L-glutamyl-tRNA(Glu) + AMP + diphosphate. Its function is as follows. Catalyzes the attachment of glutamate to tRNA(Glu) in a two-step reaction: glutamate is first activated by ATP to form Glu-AMP and then transferred to the acceptor end of tRNA(Glu). The polypeptide is Glutamate--tRNA ligase (Mycolicibacterium paratuberculosis (strain ATCC BAA-968 / K-10) (Mycobacterium paratuberculosis)).